The following is a 183-amino-acid chain: ER membrane protein complex subunit 4 (183 aa).

The residue at position 2 (threonine 2) is an N-acetylthreonine. Topologically, residues 2 to 66 (TAQGGLVANR…VQETDRILVE (65 aa)) are cytoplasmic. Residues 20–39 (ELSGPGGGSRGRSDRGSGQG) form a disordered region. Phosphoserine is present on serine 36. Residues 67-87 (KRCWDIALGPLKQIPMNLFIM) form a helical membrane-spanning segment. Topologically, residues 88-98 (YMAGNTISIFP) are lumenal. Residues 99-120 (TMMVCMMAWRPIQALMAISATF) form a helical membrane-spanning segment. The Cytoplasmic portion of the chain corresponds to 121–127 (KMLESSS). The helical transmembrane segment at 128–148 (QKFLQGLVYLIGNLMGLALAV) threads the bilayer. At 149–183 (YKCQSMGLLPTHASDWLAFIEPPERMEFSGGGLLL) the chain is on the lumenal side.

The protein belongs to the EMC4 family. In terms of assembly, component of the ER membrane protein complex (EMC). Isoform 1 is expressed in brain and heart. Isoform 2 is expressed in heart.

The protein localises to the endoplasmic reticulum membrane. Part of the endoplasmic reticulum membrane protein complex (EMC) that enables the energy-independent insertion into endoplasmic reticulum membranes of newly synthesized membrane proteins. Preferentially accommodates proteins with transmembrane domains that are weakly hydrophobic or contain destabilizing features such as charged and aromatic residues. Involved in the cotranslational insertion of multi-pass membrane proteins in which stop-transfer membrane-anchor sequences become ER membrane spanning helices. It is also required for the post-translational insertion of tail-anchored/TA proteins in endoplasmic reticulum membranes. By mediating the proper cotranslational insertion of N-terminal transmembrane domains in an N-exo topology, with translocated N-terminus in the lumen of the ER, controls the topology of multi-pass membrane proteins like the G protein-coupled receptors. By regulating the insertion of various proteins in membranes, it is indirectly involved in many cellular processes. The chain is ER membrane protein complex subunit 4 (EMC4) from Homo sapiens (Human).